The chain runs to 574 residues: Serine carboxypeptidase ctsa-3.1 (574 aa).

The first 19 residues, 1–19 (MCRTLLGVAFLVVTVLSQG), serve as a signal peptide directing secretion. N48 and N163 each carry an N-linked (GlcNAc...) asparagine glycan. The active site involves S172. N241, N408, N414, and N426 each carry an N-linked (GlcNAc...) asparagine glycan. Active-site residues include D441 and H507. A glycan (N-linked (GlcNAc...) asparagine) is linked at N534.

This sequence belongs to the peptidase S10 family.

This is Serine carboxypeptidase ctsa-3.1 from Caenorhabditis elegans.